Consider the following 63-residue polypeptide: Jingdongin-1-MT1 (63 aa).

The N-terminal stretch at 1–22 (MFTLKKSLLLLFFLGTINLSLC) is a signal peptide. The propeptide at 23–44 (EQERDADEEERRDDDEMDVEVE) is removed in mature form. Residues Cys57 and Cys63 are joined by a disulfide bond.

It belongs to the frog skin active peptide (FSAP) family. Brevinin subfamily. Expressed by the skin glands.

It is found in the secreted. Functionally, antimicrobial peptide. Active against some Gram-negative and a variety of Gram-positive bacterial strains. Active against fungus C.glabrata 090902 but not against C.neoformans 201211. Shows hemolytic activity against human erythrocytes. The polypeptide is Jingdongin-1-MT1 (Amolops mantzorum (Sichuan torrent frog)).